A 152-amino-acid polypeptide reads, in one-letter code: MAKMHTRTKGKSGSTKPIRSESPAWSTATTEEITKVVLDLWKQGNSTSVIGMVLRDNYGVPDVKLATGKKVTEILRDNSEEPNVPEDLYNLIVKAIGLRKHLVVNNKDVHNKRSLQSAESKIRRLVKYYQSTKVLPIDWKYKPETAEMLITR.

A compositionally biased stretch (basic residues) spans 1–10; sequence MAKMHTRTKG. A disordered region spans residues 1–26; it reads MAKMHTRTKGKSGSTKPIRSESPAWS. Residues 11-26 show a composition bias toward polar residues; the sequence is KSGSTKPIRSESPAWS.

This sequence belongs to the universal ribosomal protein uS15 family. As to quaternary structure, part of the 30S ribosomal subunit.

In Methanococcoides burtonii (strain DSM 6242 / NBRC 107633 / OCM 468 / ACE-M), this protein is Small ribosomal subunit protein uS15.